A 336-amino-acid chain; its full sequence is DNA-directed RNA polymerase subunit alpha (336 aa).

The alpha N-terminal domain (alpha-NTD) stretch occupies residues M1 to N226. The alpha C-terminal domain (alpha-CTD) stretch occupies residues A241 to L336.

It belongs to the RNA polymerase alpha chain family. In terms of assembly, homodimer. The RNAP catalytic core consists of 2 alpha, 1 beta, 1 beta' and 1 omega subunit. When a sigma factor is associated with the core the holoenzyme is formed, which can initiate transcription.

It catalyses the reaction RNA(n) + a ribonucleoside 5'-triphosphate = RNA(n+1) + diphosphate. DNA-dependent RNA polymerase catalyzes the transcription of DNA into RNA using the four ribonucleoside triphosphates as substrates. The chain is DNA-directed RNA polymerase subunit alpha from Paenarthrobacter aurescens (strain TC1).